Reading from the N-terminus, the 437-residue chain is Vasoactive intestinal polypeptide receptor 2 (437 aa).

A signal peptide spans 1 to 22 (MRASVVLTCYCWLLVRVSSIHP). The Extracellular portion of the chain corresponds to 23 to 123 (ECRFHLEIQE…EDESKITFYI (101 aa)). Cystine bridges form between C37-C60, C51-C92, and C74-C108. N57, N87, and N91 each carry an N-linked (GlcNAc...) asparagine glycan. A helical membrane pass occupies residues 124–149 (LVKAIYTLGYSVSLMSLTTGSIIICL). Residues 150–157 (FRKLHCTR) are Cytoplasmic-facing. The chain crosses the membrane as a helical span at residues 158-179 (NYIHLNLFLSFMLRAISVLVKD). At 180–202 (SVLYSSSGTLRCHDQPGSWVGCK) the chain is on the extracellular side. Residues C201 and C270 are joined by a disulfide bond. The helical transmembrane segment at 203 to 227 (LSLVFFQYCIMANFYWLLVEGLYLH) threads the bilayer. Over 228–238 (TLLVAILPPSR) the chain is Cytoplasmic. A helical membrane pass occupies residues 239–260 (CFLAYLLIGWGIPSVCIGAWIA). Over 261–279 (TRLSLEDTGCWDTNDHSIP) the chain is Extracellular. The chain crosses the membrane as a helical span at residues 280–303 (WWVIRMPILISIVVNFALFISIVR). Over 304-324 (ILLQKLTSPDVGGNDQSQYKR) the chain is Cytoplasmic. The chain crosses the membrane as a helical span at residues 325–345 (LAKSTLLLIPLFGVHYMVFAA). Over 346-353 (FPIGISST) the chain is Extracellular. The chain crosses the membrane as a helical span at residues 354–377 (YQILFELCVGSFQGLVVAVLYCFL). Residues 378–437 (NSEVQCELKRRWRGLCLTQPGSRDYRLHSWSMSRNGSESALQIHRGSRTQSFLQSETSVI) lie on the Cytoplasmic side of the membrane.

This sequence belongs to the G-protein coupled receptor 2 family. Interacts with ADCYAP1/PACAP (via N-terminal extracellular domain); activated by PACAP27 and CAPAC38 neuropeptides. Interacts with VIP; the interaction results in VIPR1 activation. Mainly in the thalamus, hippocampus and in the suprachiasmatic nucleus.

Its subcellular location is the cell membrane. G protein-coupled receptor activated by the neuropeptides vasoactive intestinal peptide (VIP) and pituitary adenylate cyclase-activating polypeptide (ADCYAP1/PACAP). Binds VIP and both PACAP27 and PACAP38 bioactive peptides with the order of ligand affinity of VIP = PACAP38 &gt; PACAP27. Ligand binding causes a conformation change that triggers signaling via guanine nucleotide-binding proteins (G proteins) and modulates the activity of downstream effectors. Activates cAMP-dependent pathway. May be coupled to phospholipase C. The polypeptide is Vasoactive intestinal polypeptide receptor 2 (Rattus norvegicus (Rat)).